We begin with the raw amino-acid sequence, 89 residues long: NADH-ubiquinone oxidoreductase chain 4L (89 aa).

3 consecutive transmembrane segments (helical) span residues 1–21, 22–42, and 57–77; these read MNLT…NRKN, IILM…LILV, and IYII…LVAF.

This sequence belongs to the complex I subunit 4L family.

The protein resides in the mitochondrion membrane. The catalysed reaction is a ubiquinone + NADH + 5 H(+)(in) = a ubiquinol + NAD(+) + 4 H(+)(out). In terms of biological role, core subunit of the mitochondrial membrane respiratory chain NADH dehydrogenase (Complex I) that is believed to belong to the minimal assembly required for catalysis. Complex I functions in the transfer of electrons from NADH to the respiratory chain. The immediate electron acceptor for the enzyme is believed to be ubiquinone. The polypeptide is NADH-ubiquinone oxidoreductase chain 4L (ND4L) (Cryphonectria parasitica (Chestnut blight fungus)).